The following is a 596-amino-acid chain: F-box/WD repeat-containing protein 8 (596 aa).

Position 1 is an N-acetylmethionine (methionine 1). Residues 21-95 are disordered; that stretch reads QVLRRRRRLE…PDRDAAEPEP (75 aa). The span at 29–43 shows a compositional bias: basic and acidic residues; that stretch reads LEAGERRPRRPEAGA. The span at 44-64 shows a compositional bias: low complexity; sequence RGEPASGYLGLAQGLLEGAGR. The span at 71–91 shows a compositional bias: basic and acidic residues; sequence GRTDRKDVSSRSRSPPDRDAA. Phosphoserine occurs at positions 82 and 84. The 47-residue stretch at 111 to 157 folds into the F-box domain; that stretch reads PFFDVHLPYELAINIFQYLNRRELGLCAQVSKTWKVIAEDEVLWYRL. WD repeat units follow at residues 199–248, 257–297, 298–338, 339–381, 382–427, 428–473, 474–511, and 512–559; these read AVSE…LESE, QPYV…FEHD, ARIQ…SEFE, VQKL…LHYV, YGQP…SKLG, NALG…SAHQ, LGVSAVQMDDWKIVSGGEEGLVSVWDYRMNQKLWEVHS, and RHPV…AYEF.

Component of the Cul7-RING(FBXW8) complex consisting of CUL7, RBX1, SKP1 and FBXW8; within the complex interacts with CUL7 and SKP1. Interacts with GLMN isoform 1. Interacts with OBSL1, CUL1, CUL2, CCT6B, PFDN5, CCT2, CCT3, CCT6A, CCT7, VBP1, CCDC8, ARF1, TRIP13, PDCD5 and GORASP1. Interacts with MAP4K1/HPK1 (when autophosphorylated). Associated component of the 3M complex. Interacts with POUF51 (when phosphorylated on 'Ser-347'). Phosphorylation at Ser-84 by mTORC2 promotes FBXW8 stabilization, allowing its translocation to the cytosol in response to insulin. As to expression, expressed in placenta and embryonic brain (at protein level).

The protein localises to the cytoplasm. It localises to the perinuclear region. It is found in the golgi apparatus. Its subcellular location is the cytosol. It functions in the pathway protein modification; protein ubiquitination. Functionally, substrate-recognition component of the Cul7-RING(FBXW8) ubiquitin ligase complex, which mediates the ubiquitination and subsequent proteasomal degradation of target proteins. The Cul7-RING(FBXW8) complex mediates ubiquitination and consequent degradation of GORASP1, acting as a component of the ubiquitin ligase pathway that regulates Golgi morphogenesis and dendrite patterning in brain. Mediates ubiquitination and degradation of IRS1 in a mTOR-dependent manner: the Cul7-RING(FBXW8) complex recognizes and binds IRS1 previously phosphorylated by S6 kinase (RPS6KB1 or RPS6KB2). The Cul7-RING(FBXW8) complex also mediates ubiquitination of MAP4K1/HPK1: recognizes and binds autophosphorylated MAP4K1/HPK1, leading to its degradation, thereby affecting cell proliferation and differentiation. The Cul7-RING(FBXW8) complex also mediates ubiquitination of phosphorylated cyclin-D1 (CCND1). The Cul7-RING(FBXW8) complex is however not a major regulator of CCND1 stability during the G1/S transition. Associated component of the 3M complex, suggesting that it mediates some of 3M complex functions. The polypeptide is F-box/WD repeat-containing protein 8 (Fbxw8) (Rattus norvegicus (Rat)).